The primary structure comprises 147 residues: Large ribosomal subunit protein bL9 (147 aa).

This sequence belongs to the bacterial ribosomal protein bL9 family.

In terms of biological role, binds to the 23S rRNA. The chain is Large ribosomal subunit protein bL9 from Clostridium kluyveri (strain NBRC 12016).